We begin with the raw amino-acid sequence, 252 residues long: Protein PF0476 (252 aa).

It belongs to the CinA family.

This is Protein PF0476 from Pyrococcus furiosus (strain ATCC 43587 / DSM 3638 / JCM 8422 / Vc1).